Consider the following 94-residue polypeptide: Phosphoribosyl-ATP pyrophosphatase (94 aa).

The protein belongs to the PRA-PH family.

It localises to the cytoplasm. The enzyme catalyses 1-(5-phospho-beta-D-ribosyl)-ATP + H2O = 1-(5-phospho-beta-D-ribosyl)-5'-AMP + diphosphate + H(+). The protein operates within amino-acid biosynthesis; L-histidine biosynthesis; L-histidine from 5-phospho-alpha-D-ribose 1-diphosphate: step 2/9. In Pyrobaculum aerophilum (strain ATCC 51768 / DSM 7523 / JCM 9630 / CIP 104966 / NBRC 100827 / IM2), this protein is Phosphoribosyl-ATP pyrophosphatase (hisE).